We begin with the raw amino-acid sequence, 269 residues long: Protein OPG079 (269 aa).

Belongs to the orthopoxvirus OPG079 family. Homoomultimer (Potential). Interacts with the small subunit of ribonucleotide reductase. Interacts with host FAM111A; this interaction protomtes OPG079 degradation through autophagy.

It is found in the host cytoplasm. Its function is as follows. Plays an essential role in viral DNA replication. Binds to ssDNA with high affinity and localizes to cytoplasmic factories where nascent viral genomes accumulate. May disrupt loops, hairpins and other secondary structures present on ssDNA to reduce and eliminate pausing of viral DNA polymerase at specific sites during elongation. This chain is Protein OPG079 (OPG079), found in Bos taurus (Bovine).